The primary structure comprises 293 residues: Aspartate carbamoyltransferase catalytic subunit (293 aa).

Positions 50 and 51 each coordinate carbamoyl phosphate. Lys-78 contributes to the L-aspartate binding site. Arg-100, His-127, and Gln-130 together coordinate carbamoyl phosphate. Arg-160 and Arg-210 together coordinate L-aspartate. Residues Ala-253 and Pro-254 each coordinate carbamoyl phosphate.

The protein belongs to the aspartate/ornithine carbamoyltransferase superfamily. ATCase family. Heterododecamer (2C3:3R2) of six catalytic PyrB chains organized as two trimers (C3), and six regulatory PyrI chains organized as three dimers (R2).

It catalyses the reaction carbamoyl phosphate + L-aspartate = N-carbamoyl-L-aspartate + phosphate + H(+). The protein operates within pyrimidine metabolism; UMP biosynthesis via de novo pathway; (S)-dihydroorotate from bicarbonate: step 2/3. Functionally, catalyzes the condensation of carbamoyl phosphate and aspartate to form carbamoyl aspartate and inorganic phosphate, the committed step in the de novo pyrimidine nucleotide biosynthesis pathway. In Staphylococcus aureus (strain USA300), this protein is Aspartate carbamoyltransferase catalytic subunit.